Consider the following 92-residue polypeptide: MPRSLKKGPFVDEHLLNKVDAQNEKGTKQVIKTWSRRSTILPDFIGHTFAVHDGRKHVPVFVDDSMVGHKLGEFAPTKTFKGHIKDDKKGRR.

This sequence belongs to the universal ribosomal protein uS19 family.

In terms of biological role, protein S19 forms a complex with S13 that binds strongly to the 16S ribosomal RNA. This is Small ribosomal subunit protein uS19 from Corynebacterium diphtheriae (strain ATCC 700971 / NCTC 13129 / Biotype gravis).